The following is a 370-amino-acid chain: 3-isopropylmalate dehydrogenase (370 aa).

77–90 (GPKWDSVPYEVRPE) is a binding site for NAD(+). Arg97, Arg107, Arg135, and Asp226 together coordinate substrate. Mg(2+) is bound by residues Asp226, Asp250, and Asp254. 290–302 (GSAPDIAGKGIAN) lines the NAD(+) pocket.

This sequence belongs to the isocitrate and isopropylmalate dehydrogenases family. LeuB type 1 subfamily. As to quaternary structure, homodimer. The cofactor is Mg(2+). Mn(2+) is required as a cofactor.

It is found in the cytoplasm. It carries out the reaction (2R,3S)-3-isopropylmalate + NAD(+) = 4-methyl-2-oxopentanoate + CO2 + NADH. The protein operates within amino-acid biosynthesis; L-leucine biosynthesis; L-leucine from 3-methyl-2-oxobutanoate: step 3/4. Catalyzes the oxidation of 3-carboxy-2-hydroxy-4-methylpentanoate (3-isopropylmalate) to 3-carboxy-4-methyl-2-oxopentanoate. The product decarboxylates to 4-methyl-2 oxopentanoate. This chain is 3-isopropylmalate dehydrogenase, found in Brucella melitensis biotype 1 (strain ATCC 23456 / CCUG 17765 / NCTC 10094 / 16M).